The chain runs to 699 residues: Endoplasmic reticulum mannosyl-oligosaccharide 1,2-alpha-mannosidase (699 aa).

Topologically, residues 1–84 (MAACEGRRSG…WKQLSRLQRN (84 aa)) are cytoplasmic. A helical; Signal-anchor for type II membrane protein membrane pass occupies residues 85-105 (MILFLLAFLLFCGLLFYINLA). The Lumenal segment spans residues 106–699 (DHWKALAFRL…AHPLPIWTPA (594 aa)). The segment at 125–243 (IAGLKPANPP…LPPARTQGTP (119 aa)) is disordered. Over residues 176–201 (DLKDGTQEEATKRQEAPVDPRPEGDP) the composition is skewed to basic and acidic residues. Glu-330 functions as the Proton donor in the catalytic mechanism. Residue Asp-463 is part of the active site. Cys-527 and Cys-556 form a disulfide bridge. Glu-570 functions as the Proton donor in the catalytic mechanism. Glu-599 is a catalytic residue. Thr-688 is a binding site for Ca(2+).

The protein belongs to the glycosyl hydrolase 47 family. Ca(2+) serves as cofactor. Widely expressed.

It localises to the endoplasmic reticulum membrane. The enzyme catalyses N(4)-(alpha-D-Man-(1-&gt;2)-alpha-D-Man-(1-&gt;2)-alpha-D-Man-(1-&gt;3)-[alpha-D-Man-(1-&gt;2)-alpha-D-Man-(1-&gt;3)-[alpha-D-Man-(1-&gt;2)-alpha-D-Man-(1-&gt;6)]-alpha-D-Man-(1-&gt;6)]-beta-D-Man-(1-&gt;4)-beta-D-GlcNAc-(1-&gt;4)-beta-D-GlcNAc)-L-asparaginyl-[protein] (N-glucan mannose isomer 9A1,2,3B1,2,3) + 4 H2O = N(4)-(alpha-D-Man-(1-&gt;3)-[alpha-D-Man-(1-&gt;3)-[alpha-D-Man-(1-&gt;6)]-alpha-D-Man-(1-&gt;6)]-beta-D-Man-(1-&gt;4)-beta-D-GlcNAc-(1-&gt;4)-beta-D-GlcNAc)-L-asparaginyl-[protein] (N-glucan mannose isomer 5A1,2) + 4 beta-D-mannose. It catalyses the reaction N(4)-(alpha-D-Man-(1-&gt;2)-alpha-D-Man-(1-&gt;2)-alpha-D-Man-(1-&gt;3)-[alpha-D-Man-(1-&gt;3)-[alpha-D-Man-(1-&gt;2)-alpha-D-Man-(1-&gt;6)]-alpha-D-Man-(1-&gt;6)]-beta-D-Man-(1-&gt;4)-beta-D-GlcNAc-(1-&gt;4)-beta-D-GlcNAc)-L-asparaginyl-[protein] (N-glucan mannose isomer 8A1,2,3B1,3) + 3 H2O = N(4)-(alpha-D-Man-(1-&gt;3)-[alpha-D-Man-(1-&gt;3)-[alpha-D-Man-(1-&gt;6)]-alpha-D-Man-(1-&gt;6)]-beta-D-Man-(1-&gt;4)-beta-D-GlcNAc-(1-&gt;4)-beta-D-GlcNAc)-L-asparaginyl-[protein] (N-glucan mannose isomer 5A1,2) + 3 beta-D-mannose. Its pathway is protein modification; protein glycosylation. With respect to regulation, inhibited by both 1-deoxymannojirimycin (dMNJ) and kifunensine. Its function is as follows. Involved in glycoprotein quality control targeting of misfolded glycoproteins for degradation. It primarily trims a single alpha-1,2-linked mannose residue from Man(9)GlcNAc(2) to produce Man(8)GlcNAc(2), but at high enzyme concentrations, as found in the ER quality control compartment (ERQC), it further trims the carbohydrates to Man(5-6)GlcNAc(2). The sequence is that of Endoplasmic reticulum mannosyl-oligosaccharide 1,2-alpha-mannosidase (MAN1B1) from Homo sapiens (Human).